Consider the following 513-residue polypeptide: ATP synthase subunit alpha (513 aa).

Glycine 169–threonine 176 contributes to the ATP binding site.

This sequence belongs to the ATPase alpha/beta chains family. F-type ATPases have 2 components, CF(1) - the catalytic core - and CF(0) - the membrane proton channel. CF(1) has five subunits: alpha(3), beta(3), gamma(1), delta(1), epsilon(1). CF(0) has three main subunits: a(1), b(2) and c(9-12). The alpha and beta chains form an alternating ring which encloses part of the gamma chain. CF(1) is attached to CF(0) by a central stalk formed by the gamma and epsilon chains, while a peripheral stalk is formed by the delta and b chains.

The protein localises to the cell inner membrane. It carries out the reaction ATP + H2O + 4 H(+)(in) = ADP + phosphate + 5 H(+)(out). In terms of biological role, produces ATP from ADP in the presence of a proton gradient across the membrane. The alpha chain is a regulatory subunit. The chain is ATP synthase subunit alpha from Nitrosomonas europaea (strain ATCC 19718 / CIP 103999 / KCTC 2705 / NBRC 14298).